Reading from the N-terminus, the 517-residue chain is Beta-glucosidase 17 (517 aa).

The N-terminal stretch at 1 to 23 (MAIKSIFIIIIISIITSISELYA) is a signal peptide. A beta-D-glucoside-binding positions include Gln54, His158, and 203–204 (NE). The active-site Proton donor is Glu204. Cys223 and Cys230 are oxidised to a cystine. A glycan (N-linked (GlcNAc...) asparagine) is linked at Asn229. Tyr346 lines the a beta-D-glucoside pocket. 2 N-linked (GlcNAc...) asparagine glycosylation sites follow: Asn361 and Asn371. Residues Glu417, Trp466, 473-474 (EW), and Tyr482 each bind a beta-D-glucoside. The active-site Nucleophile is the Glu417. Asn510 carries an N-linked (GlcNAc...) asparagine glycan.

Belongs to the glycosyl hydrolase 1 family.

The catalysed reaction is Hydrolysis of terminal, non-reducing beta-D-glucosyl residues with release of beta-D-glucose.. This chain is Beta-glucosidase 17, found in Arabidopsis thaliana (Mouse-ear cress).